The sequence spans 1563 residues: Galactose-specific cell agglutination protein gsf2 (1563 aa).

The N-terminal stretch at 1–27 (MSVRRFLSTSARALLFTAALLPSLTSG) is a signal peptide. 29 tandem repeats follow at residues 203–280 (TTTT…PTTV), 281–358 (TTTT…PTTV), 359–436 (TTTT…PTTV), 437–514 (TTTT…PTTV), 515–592 (TTTT…PTTV), 593–670 (TTTT…PTTV), 671–750 (TTTT…VSAT), 751–825 (TTTT…GTTT), 826–869 (VVIQ…GTTT), 870–913 (VVIQ…GTTT), 914–957 (VVIQ…GTTT), 958–1001 (VVIQ…GTTT), 1002–1045 (VVIQ…GTTT), 1046–1089 (VVIQ…GTTT), 1090–1133 (VVIQ…GTTT), 1134–1140 (VVINTPT), 1141–1162 (TTGS…ETQL), 1163–1184 (TTAT…ETQV), 1185–1200 (TTGT…ETQA), 1201–1221 (TTAT…TETQ), 1223–1244 (TTAT…ETQV), 1245–1266 (TTAT…ETQV), 1267–1282 (TTGT…ETQA), 1283–1304 (TTAT…ETQA), 1305–1326 (TTAT…ETQV), 1327–1348 (TTAT…ETQV), 1349–1364 (TTGT…ETQA), 1365–1386 (TTAT…ETQV), and 1387–1397 (TTATEVQPTTA). The interval 203–825 (TTTTTVGYPG…IPTGTTGTTT (623 aa)) is 8 X 78 AA approximate tandem repeats. 12 N-linked (GlcNAc...) asparagine glycosylation sites follow: asparagine 224, asparagine 263, asparagine 302, asparagine 341, asparagine 380, asparagine 419, asparagine 458, asparagine 497, asparagine 536, asparagine 575, asparagine 614, and asparagine 653. Residue asparagine 784 is glycosylated (N-linked (GlcNAc...) asparagine). The 8 X 44 AA approximate tandem repeats stretch occupies residues 826 to 1140 (VVIQTPTTVT…TTTVVINTPT (315 aa)). The interval 1135-1393 (VINTPTTTGS…TQVTTATEVQ (259 aa)) is disordered. Positions 1141–1397 (TTGSEVLPTT…TATEVQPTTA (257 aa)) are 13 X 22 AA approximate tandem repeats. N-linked (GlcNAc...) asparagine glycans are attached at residues asparagine 1510, asparagine 1516, asparagine 1529, and asparagine 1532. Serine 1539 carries the GPI-anchor amidated serine lipid modification. Positions 1540–1563 (SAGANKPIAYLTFVSLFVYIVTLI) are cleaved as a propeptide — removed in mature form.

Belongs to the mam3/map4 family.

The protein localises to the cell membrane. Galactose-specific adhesion protein essential for non-sexual flocculation and filamentous growth. Required for adhesion and filamentous growth through recognition of galactose residues on cell surface glycoconjugates. Induces flocculation when overexpressed. The protein is Galactose-specific cell agglutination protein gsf2 of Schizosaccharomyces pombe (strain 972 / ATCC 24843) (Fission yeast).